We begin with the raw amino-acid sequence, 177 residues long: UPF0114 protein jhp_0175 (177 aa).

Helical transmembrane passes span Trp15 to Phe35, Leu54 to Val74, and Pro145 to Val165.

The protein belongs to the UPF0114 family.

The protein resides in the cell membrane. The polypeptide is UPF0114 protein jhp_0175 (Helicobacter pylori (strain J99 / ATCC 700824) (Campylobacter pylori J99)).